The sequence spans 358 residues: CRS2-associated factor 2, mitochondrial (358 aa).

The N-terminal 28 residues, 1–28 (MLSIRRSLTLAKEPKDLFLFLCNLRARC), are a transit peptide targeting the mitochondrion. The interval 35–64 (DPPFSPLSKPTKPPKEKKKQKTKKQDQSSE) is disordered. CRM domains follow at residues 141–239 (ETLT…SRPI) and 261–357 (DGLE…ELVT).

In terms of assembly, part of large ribonucleo-protein complexes that include group IIB introns.

Its subcellular location is the mitochondrion. Its function is as follows. May be involved in the splicing of group IIB introns in mitochondria. In Arabidopsis thaliana (Mouse-ear cress), this protein is CRS2-associated factor 2, mitochondrial.